The following is a 238-amino-acid chain: Large ribosomal subunit protein uL2 (238 aa).

The interval 203–223 (GGGAWKHPGKPTTVSRNAPPG) is disordered.

This sequence belongs to the universal ribosomal protein uL2 family. As to quaternary structure, part of the 50S ribosomal subunit. Forms a bridge to the 30S subunit in the 70S ribosome.

One of the primary rRNA binding proteins. Required for association of the 30S and 50S subunits to form the 70S ribosome, for tRNA binding and peptide bond formation. It has been suggested to have peptidyltransferase activity; this is somewhat controversial. Makes several contacts with the 16S rRNA in the 70S ribosome. The sequence is that of Large ribosomal subunit protein uL2 from Methanosarcina barkeri (strain Fusaro / DSM 804).